Reading from the N-terminus, the 124-residue chain is Small ribosomal subunit protein uS12 (124 aa).

Position 89 is a 3-methylthioaspartic acid (D89). The interval 105–124 is disordered; that stretch reads AGVKDRRQSRSKYGAKRPKA. The span at 113 to 124 shows a compositional bias: basic residues; sequence SRSKYGAKRPKA.

It belongs to the universal ribosomal protein uS12 family. In terms of assembly, part of the 30S ribosomal subunit. Contacts proteins S8 and S17. May interact with IF1 in the 30S initiation complex.

With S4 and S5 plays an important role in translational accuracy. In terms of biological role, interacts with and stabilizes bases of the 16S rRNA that are involved in tRNA selection in the A site and with the mRNA backbone. Located at the interface of the 30S and 50S subunits, it traverses the body of the 30S subunit contacting proteins on the other side and probably holding the rRNA structure together. The combined cluster of proteins S8, S12 and S17 appears to hold together the shoulder and platform of the 30S subunit. The chain is Small ribosomal subunit protein uS12 (rpsL) from Synechococcus elongatus (strain ATCC 33912 / PCC 7942 / FACHB-805) (Anacystis nidulans R2).